A 397-amino-acid polypeptide reads, in one-letter code: Transcription factor GATA-5 (397 aa).

Positions 48–116 (GCEPSPQPPE…SAGGRDGSAY (69 aa)) are disordered. Low complexity predominate over residues 87–101 (PPGATAFPFAHSPSG). The span at 102 to 112 (PGSGGSAGGRD) shows a compositional bias: gly residues. 2 consecutive GATA-type zinc fingers follow at residues 189–213 (CVNCGALSTPLWRRDGTGHYLCNAC) and 243–267 (CTNCHTTNTTLWRRNSEGEPVCNAC). The interval 281–356 (AMKKESIQTR…ASGQEDDSLA (76 aa)) is disordered. Positions 289–298 (TRKRKPKTIA) are enriched in basic residues. A compositionally biased stretch (low complexity) spans 310-335 (ASASPSAVASTDSSAATSKAKPSLAS).

It localises to the nucleus. Transcription factor required during cardiovascular development. Plays an important role in the transcriptional program(s) that underlies smooth muscle cell diversity. Binds to the functionally important CEF-1 nuclear protein binding site in the cardiac-specific slow/cardiac troponin C transcriptional enhancer. The chain is Transcription factor GATA-5 from Homo sapiens (Human).